Here is a 180-residue protein sequence, read N- to C-terminus: 4-hydroxy-3-methylbut-2-enyl diphosphate reductase (180 aa).

Cys-12 is a [4Fe-4S] cluster binding site. The (2E)-4-hydroxy-3-methylbut-2-enyl diphosphate site is built by His-41 and His-74. His-41 and His-74 together coordinate dimethylallyl diphosphate. His-41 and His-74 together coordinate isopentenyl diphosphate. Cys-96 is a [4Fe-4S] cluster binding site. (2E)-4-hydroxy-3-methylbut-2-enyl diphosphate is bound at residue His-124. His-124 is a binding site for dimethylallyl diphosphate. His-124 serves as a coordination point for isopentenyl diphosphate. Glu-126 (proton donor) is an active-site residue. Position 168 (Thr-168) interacts with (2E)-4-hydroxy-3-methylbut-2-enyl diphosphate.

The protein belongs to the IspH family. [4Fe-4S] cluster serves as cofactor.

It carries out the reaction isopentenyl diphosphate + 2 oxidized [2Fe-2S]-[ferredoxin] + H2O = (2E)-4-hydroxy-3-methylbut-2-enyl diphosphate + 2 reduced [2Fe-2S]-[ferredoxin] + 2 H(+). The catalysed reaction is dimethylallyl diphosphate + 2 oxidized [2Fe-2S]-[ferredoxin] + H2O = (2E)-4-hydroxy-3-methylbut-2-enyl diphosphate + 2 reduced [2Fe-2S]-[ferredoxin] + 2 H(+). It participates in isoprenoid biosynthesis; dimethylallyl diphosphate biosynthesis; dimethylallyl diphosphate from (2E)-4-hydroxy-3-methylbutenyl diphosphate: step 1/1. Its pathway is isoprenoid biosynthesis; isopentenyl diphosphate biosynthesis via DXP pathway; isopentenyl diphosphate from 1-deoxy-D-xylulose 5-phosphate: step 6/6. Its function is as follows. Catalyzes the conversion of 1-hydroxy-2-methyl-2-(E)-butenyl 4-diphosphate (HMBPP) into a mixture of isopentenyl diphosphate (IPP) and dimethylallyl diphosphate (DMAPP). Acts in the terminal step of the DOXP/MEP pathway for isoprenoid precursor biosynthesis. The chain is 4-hydroxy-3-methylbut-2-enyl diphosphate reductase from Pseudomonas fluorescens.